Reading from the N-terminus, the 123-residue chain is Ribosome-binding factor A (123 aa).

Belongs to the RbfA family. As to quaternary structure, monomer. Binds 30S ribosomal subunits, but not 50S ribosomal subunits or 70S ribosomes.

It localises to the cytoplasm. Functionally, one of several proteins that assist in the late maturation steps of the functional core of the 30S ribosomal subunit. Associates with free 30S ribosomal subunits (but not with 30S subunits that are part of 70S ribosomes or polysomes). Required for efficient processing of 16S rRNA. May interact with the 5'-terminal helix region of 16S rRNA. The polypeptide is Ribosome-binding factor A (Legionella pneumophila (strain Lens)).